The sequence spans 316 residues: Ribosomal RNA small subunit methyltransferase H (316 aa).

Residues Gly35–His37, Asp55, Phe79, Asp101, and Gln108 contribute to the S-adenosyl-L-methionine site.

Belongs to the methyltransferase superfamily. RsmH family.

Its subcellular location is the cytoplasm. It catalyses the reaction cytidine(1402) in 16S rRNA + S-adenosyl-L-methionine = N(4)-methylcytidine(1402) in 16S rRNA + S-adenosyl-L-homocysteine + H(+). Its function is as follows. Specifically methylates the N4 position of cytidine in position 1402 (C1402) of 16S rRNA. This is Ribosomal RNA small subunit methyltransferase H from Aliivibrio salmonicida (strain LFI1238) (Vibrio salmonicida (strain LFI1238)).